The primary structure comprises 907 residues: DNA ligase 4 (907 aa).

ATP-binding residues include Glu273, Lys275, Arg280, Glu333, Phe378, Glu438, Lys443, Lys460, and Lys462. Lys275 (N6-AMP-lysine intermediate) is an active-site residue. Mg(2+) is bound at residue Glu333. Glu438 contacts Mg(2+). 2 consecutive BRCT domains span residues 655–754 (PVSN…ESDI) and 800–906 (VPLF…HYQC).

It belongs to the ATP-dependent DNA ligase family. It depends on Mg(2+) as a cofactor.

Its subcellular location is the nucleus. It carries out the reaction ATP + (deoxyribonucleotide)n-3'-hydroxyl + 5'-phospho-(deoxyribonucleotide)m = (deoxyribonucleotide)n+m + AMP + diphosphate.. Its function is as follows. DNA ligase involved in DNA non-homologous end joining (NHEJ); required for double-strand break (DSB) repair. The polypeptide is DNA ligase 4 (LIG4) (Kluyveromyces lactis (strain ATCC 8585 / CBS 2359 / DSM 70799 / NBRC 1267 / NRRL Y-1140 / WM37) (Yeast)).